The following is a 277-amino-acid chain: 4-hydroxy-tetrahydrodipicolinate reductase (277 aa).

NAD(+) is bound by residues Gly-11–Met-16 and Gly-110–Thr-112. The active-site Proton donor/acceptor is His-166. His-167 contributes to the (S)-2,3,4,5-tetrahydrodipicolinate binding site. Lys-170 acts as the Proton donor in catalysis. Gly-176–Thr-177 serves as a coordination point for (S)-2,3,4,5-tetrahydrodipicolinate.

This sequence belongs to the DapB family.

The protein resides in the cytoplasm. The enzyme catalyses (S)-2,3,4,5-tetrahydrodipicolinate + NAD(+) + H2O = (2S,4S)-4-hydroxy-2,3,4,5-tetrahydrodipicolinate + NADH + H(+). It catalyses the reaction (S)-2,3,4,5-tetrahydrodipicolinate + NADP(+) + H2O = (2S,4S)-4-hydroxy-2,3,4,5-tetrahydrodipicolinate + NADPH + H(+). Its pathway is amino-acid biosynthesis; L-lysine biosynthesis via DAP pathway; (S)-tetrahydrodipicolinate from L-aspartate: step 4/4. Catalyzes the conversion of 4-hydroxy-tetrahydrodipicolinate (HTPA) to tetrahydrodipicolinate. The sequence is that of 4-hydroxy-tetrahydrodipicolinate reductase from Synechococcus sp. (strain CC9605).